Consider the following 380-residue polypeptide: Endo-polygalacturonase (380 aa).

The N-terminal stretch at 1–17 (MVHILSSALSLLRLGAA) is a signal peptide. A propeptide spanning residues 18–42 (VSAAPAPAPTAAPNVADALAAVEKR) is cleaved from the precursor. An intrachain disulfide couples Cys-46 to Cys-64. PbH1 repeat units follow at residues 178 to 207 (ASGL…DVGS), 208 to 229 (STDI…AINS), 230 to 250 (GTGI…SIGS), 259 to 280 (VSDV…RIKT), 288 to 310 (VSGV…VIEQ), and 322 to 343 (TSGV…SSSA). Catalysis depends on Asp-222, which acts as the Proton donor. Cys-224 and Cys-240 form a disulfide bridge. His-244 is a catalytic residue. Cys-350 and Cys-353 are oxidised to a cystine. N-linked (GlcNAc...) asparagine glycosylation occurs at Asn-361. Cys-371 and Cys-380 are disulfide-bonded.

The protein belongs to the glycosyl hydrolase 28 family.

Its subcellular location is the secreted. The catalysed reaction is (1,4-alpha-D-galacturonosyl)n+m + H2O = (1,4-alpha-D-galacturonosyl)n + (1,4-alpha-D-galacturonosyl)m.. This is Endo-polygalacturonase (PG1) from Sclerotinia sclerotiorum (White mold).